Consider the following 130-residue polypeptide: MIVRTTDEITGTNRDVAAEHWRSKRIILADDGVGFSFHETTIDANSVSEFHYQHHVEAVWVVEGTGTLTNHETGEVHPLRPGTMYLLNGHERHRVTCDTTMRMLCVFNPPVTGREIHDENGAYPAAVQAS.

Belongs to the ectoine synthase family.

It catalyses the reaction (2S)-4-acetamido-2-aminobutanoate = L-ectoine + H2O. It participates in amine and polyamine biosynthesis; ectoine biosynthesis; L-ectoine from L-aspartate 4-semialdehyde: step 3/3. Its function is as follows. Catalyzes the circularization of gamma-N-acetyl-alpha,gamma-diaminobutyric acid (ADABA) to ectoine (1,4,5,6-tetrahydro-2-methyl-4-pyrimidine carboxylic acid), which is an excellent osmoprotectant. The sequence is that of L-ectoine synthase from Mycolicibacterium vanbaalenii (strain DSM 7251 / JCM 13017 / BCRC 16820 / KCTC 9966 / NRRL B-24157 / PYR-1) (Mycobacterium vanbaalenii).